Here is a 397-residue protein sequence, read N- to C-terminus: Na(+)/H(+) antiporter NhaA 1 (397 aa).

The next 12 helical transmembrane spans lie at 15-35, 42-62, 65-85, 101-121, 129-149, 160-180, 183-203, 219-241, 265-285, 299-319, 335-355, and 370-390; these read FQLE…ALII, YLYG…LNIA, LLLW…GLEV, ILPA…YWFI, VAGW…VLAL, LFLM…IALF, GTLS…LVAM, LILW…ALAF, WVAY…SLAG, ITIG…WVAV, ILGV…VGSL, and MGIL…TAMA.

Belongs to the NhaA Na(+)/H(+) (TC 2.A.33) antiporter family.

It localises to the cell inner membrane. It carries out the reaction Na(+)(in) + 2 H(+)(out) = Na(+)(out) + 2 H(+)(in). Na(+)/H(+) antiporter that extrudes sodium in exchange for external protons. This chain is Na(+)/H(+) antiporter NhaA 1, found in Pseudomonas putida (strain ATCC 47054 / DSM 6125 / CFBP 8728 / NCIMB 11950 / KT2440).